The sequence spans 1300 residues: Kinesin-like protein KIN-4C (1300 aa).

The region spanning 6 to 360 is the Kinesin motor domain; it reads CVRVAVNIRP…LKYANRARNI (355 aa). Position 85–92 (85–92) interacts with ATP; sequence GQTGSGKT. Coiled coils occupy residues 580-615, 653-697, and 781-823; these read TSVL…LASI, QLMR…RAWK, and EVTV…AKIS. Composition is skewed to basic and acidic residues over residues 956-971 and 1001-1013; these read ADEN…KQET and EWKP…RESE. 4 disordered regions span residues 956–1018, 1097–1132, 1144–1187, and 1200–1300; these read ADEN…ESVI, NADG…QQQV, ALAD…RKKW, and PALP…TRRV. 4 stretches are compositionally biased toward polar residues: residues 1169-1180, 1205-1222, 1230-1239, and 1275-1288; these read IGNTTGKSNVPR, THTN…TVDS, NSDSGESNSI, and GFVQ…SGSR. Residues 1289–1300 are compositionally biased toward basic and acidic residues; it reads TSDEKENHTRRV.

It belongs to the TRAFAC class myosin-kinesin ATPase superfamily. Kinesin family. KIN-4 subfamily. In terms of assembly, homodimer.

Its function is as follows. Kinesin-like motor protein involved in the control of the oriented deposition of cellulose microfibrils. This chain is Kinesin-like protein KIN-4C, found in Arabidopsis thaliana (Mouse-ear cress).